Here is a 78-residue protein sequence, read N- to C-terminus: Large ribosomal subunit protein bL28 (78 aa).

The disordered stretch occupies residues 1–30; the sequence is MAAHCQVTGAQPGFGHSISHSHRRTKRRWN. Over residues 19-30 the composition is skewed to basic residues; sequence SHSHRRTKRRWN.

Belongs to the bacterial ribosomal protein bL28 family.

The protein is Large ribosomal subunit protein bL28 of Kocuria rhizophila (strain ATCC 9341 / DSM 348 / NBRC 103217 / DC2201).